The sequence spans 228 residues: Sec-independent protein translocase protein TatB (228 aa).

A helical transmembrane segment spans residues 1 to 21 (MFDFGLGELVFVGIIALIVLG). 2 disordered regions span residues 109 to 162 (DFGV…AETD) and 197 to 228 (PHTT…VRKS). Residues 206-228 (AISRKRDFRPKHRAKPKLRVRKS) are compositionally biased toward basic residues.

The protein belongs to the TatB family. In terms of assembly, the Tat system comprises two distinct complexes: a TatABC complex, containing multiple copies of TatA, TatB and TatC subunits, and a separate TatA complex, containing only TatA subunits. Substrates initially bind to the TatABC complex, which probably triggers association of the separate TatA complex to form the active translocon.

It is found in the cell inner membrane. Part of the twin-arginine translocation (Tat) system that transports large folded proteins containing a characteristic twin-arginine motif in their signal peptide across membranes. Together with TatC, TatB is part of a receptor directly interacting with Tat signal peptides. TatB may form an oligomeric binding site that transiently accommodates folded Tat precursor proteins before their translocation. The sequence is that of Sec-independent protein translocase protein TatB from Neisseria meningitidis serogroup B (strain ATCC BAA-335 / MC58).